We begin with the raw amino-acid sequence, 682 residues long: Heat shock 70 kDa protein 9, mitochondrial (682 aa).

Residues 1–46 (MASVALLRSFRRREVQMASVSAFKSVSANGKNSMFGKLGYLARPFC) constitute a mitochondrion transit peptide. Positions 640–682 (SKIGEHMSKGSGSSGSDGSSGEGTSGTEQTPEAEFEEASGSRK) are disordered. The segment covering 651–663 (GSSGSDGSSGEGT) has biased composition (gly residues).

Belongs to the heat shock protein 70 (TC 1.A.33) family. DnaK subfamily. Interacts with HSCB.

The protein resides in the mitochondrion. It localises to the cytoplasm. Its subcellular location is the cytosol. Functionally, chaperone involved in the maturation of iron-sulfur [Fe-S] cluster-containing proteins. Has a low intrinsic ATPase activity which is markedly stimulated by HSCB and ISU1. In cooperation with other chaperones, Hsp70s are key components that facilitate folding of de novo synthesized proteins, assist translocation of precursor proteins into organelles, and are responsible for degradation of damaged protein under stress conditions. The sequence is that of Heat shock 70 kDa protein 9, mitochondrial from Arabidopsis thaliana (Mouse-ear cress).